Reading from the N-terminus, the 105-residue chain is MICOS complex subunit Mic10 (105 aa).

The chain crosses the membrane as a helical span at residues 29 to 46; the sequence is LLKVTGGVAIGIVASVAF. At 47–105 the chain is on the mitochondrial intermembrane side; it reads FKSRSWPIWFGSGVGLGTGWSNCRHDFASPYVLHGKRVPAGQDSQGKPAYNIITEQHKQ. The tract at residues 85–105 is disordered; sequence PAGQDSQGKPAYNIITEQHKQ.

The protein belongs to the MICOS complex subunit Mic10 family. As to quaternary structure, component of the mitochondrial contact site and cristae organizing system (MICOS) complex.

It localises to the mitochondrion inner membrane. Functionally, component of the MICOS complex, a large protein complex of the mitochondrial inner membrane that plays crucial roles in the maintenance of crista junctions, inner membrane architecture, and formation of contact sites to the outer membrane. The chain is MICOS complex subunit Mic10 from Caenorhabditis elegans.